Reading from the N-terminus, the 177-residue chain is ATP synthase subunit delta (177 aa).

This sequence belongs to the ATPase delta chain family. As to quaternary structure, F-type ATPases have 2 components, F(1) - the catalytic core - and F(0) - the membrane proton channel. F(1) has five subunits: alpha(3), beta(3), gamma(1), delta(1), epsilon(1). F(0) has three main subunits: a(1), b(2) and c(10-14). The alpha and beta chains form an alternating ring which encloses part of the gamma chain. F(1) is attached to F(0) by a central stalk formed by the gamma and epsilon chains, while a peripheral stalk is formed by the delta and b chains.

Its subcellular location is the cell inner membrane. Its function is as follows. F(1)F(0) ATP synthase produces ATP from ADP in the presence of a proton or sodium gradient. F-type ATPases consist of two structural domains, F(1) containing the extramembraneous catalytic core and F(0) containing the membrane proton channel, linked together by a central stalk and a peripheral stalk. During catalysis, ATP synthesis in the catalytic domain of F(1) is coupled via a rotary mechanism of the central stalk subunits to proton translocation. In terms of biological role, this protein is part of the stalk that links CF(0) to CF(1). It either transmits conformational changes from CF(0) to CF(1) or is implicated in proton conduction. This Shewanella oneidensis (strain ATCC 700550 / JCM 31522 / CIP 106686 / LMG 19005 / NCIMB 14063 / MR-1) protein is ATP synthase subunit delta.